The sequence spans 325 residues: Glutarate 2-hydroxylase (325 aa).

Fe cation contacts are provided by histidine 160, aspartate 162, and histidine 292.

This sequence belongs to the glutarate hydroxylase family. Homotetramer. Fe(2+) is required as a cofactor.

The catalysed reaction is glutarate + 2-oxoglutarate + O2 = (S)-2-hydroxyglutarate + succinate + CO2. The protein operates within amino-acid degradation. In terms of biological role, acts as an alpha-ketoglutarate-dependent dioxygenase catalyzing hydroxylation of glutarate (GA) to L-2-hydroxyglutarate (L2HG). Functions in a L-lysine degradation pathway that proceeds via cadaverine, glutarate and L-2-hydroxyglutarate. The chain is Glutarate 2-hydroxylase from Escherichia coli (strain 55989 / EAEC).